Here is a 25-residue protein sequence, read N- to C-terminus: Granule-bound starch synthase 1, chloroplastic/amyloplastic (25 aa).

ADP-alpha-D-glucose is bound at residue lysine 16.

The protein belongs to the glycosyltransferase 1 family. Bacterial/plant glycogen synthase subfamily. Expressed in endosperm.

The protein localises to the plastid. It is found in the chloroplast. The protein resides in the amyloplast. It carries out the reaction an NDP-alpha-D-glucose + [(1-&gt;4)-alpha-D-glucosyl](n) = [(1-&gt;4)-alpha-D-glucosyl](n+1) + a ribonucleoside 5'-diphosphate + H(+). The protein operates within glycan biosynthesis; starch biosynthesis. Required for the synthesis of amylose in endosperm. The polypeptide is Granule-bound starch synthase 1, chloroplastic/amyloplastic (Fagopyrum esculentum (Common buckwheat)).